The sequence spans 407 residues: B3 domain-containing protein Os07g0183200 (407 aa).

The TF-B3 DNA-binding region spans 124-227 (FVKTLMISDF…ELYVGVRRQR (104 aa)).

The protein resides in the nucleus. In Oryza sativa subsp. japonica (Rice), this protein is B3 domain-containing protein Os07g0183200.